We begin with the raw amino-acid sequence, 96 residues long: Alpha-elapitoxin-Al2b (96 aa).

The first 21 residues, 1-21 (MKTLLLTLVVVTIVCLDFGGG), serve as a signal peptide directing secretion. 5 disulfide bridges follow: cysteine 24–cysteine 41, cysteine 34–cysteine 62, cysteine 47–cysteine 51, cysteine 66–cysteine 77, and cysteine 78–cysteine 83.

This sequence belongs to the three-finger toxin family. Long-chain subfamily. Type II alpha-neurotoxin sub-subfamily. Expressed by the venom gland.

It localises to the secreted. In terms of biological role, potent long-chain postsynaptic neurotoxin. Pseudo-irreversibly inhibits the nicotinic acetylcholine receptor through competitive antagonism. The chain is Alpha-elapitoxin-Al2b from Austrelaps labialis (Pygmy copperhead).